The chain runs to 443 residues: tRNA-2-methylthio-N(6)-dimethylallyladenosine synthase (443 aa).

The 118-residue stretch at 3-120 folds into the MTTase N-terminal domain; it reads SKLYIKTFGC…LPELIDARRR (118 aa). [4Fe-4S] cluster contacts are provided by Cys12, Cys49, Cys83, Cys157, Cys161, and Cys164. One can recognise a Radical SAM core domain in the interval 143-377; the sequence is RTTGATAFVS…KIQRNAQMIS (235 aa). A TRAM domain is found at 378 to 441; sequence QSMVDTIQRV…SHTLRGEISD (64 aa).

This sequence belongs to the methylthiotransferase family. MiaB subfamily. As to quaternary structure, monomer. Requires [4Fe-4S] cluster as cofactor.

It localises to the cytoplasm. It catalyses the reaction N(6)-dimethylallyladenosine(37) in tRNA + (sulfur carrier)-SH + AH2 + 2 S-adenosyl-L-methionine = 2-methylsulfanyl-N(6)-dimethylallyladenosine(37) in tRNA + (sulfur carrier)-H + 5'-deoxyadenosine + L-methionine + A + S-adenosyl-L-homocysteine + 2 H(+). In terms of biological role, catalyzes the methylthiolation of N6-(dimethylallyl)adenosine (i(6)A), leading to the formation of 2-methylthio-N6-(dimethylallyl)adenosine (ms(2)i(6)A) at position 37 in tRNAs that read codons beginning with uridine. The protein is tRNA-2-methylthio-N(6)-dimethylallyladenosine synthase of Nitrosomonas eutropha (strain DSM 101675 / C91 / Nm57).